The chain runs to 628 residues: Cystathionine gamma-synthase-like enzyme iboG2 (628 aa).

Substrate is bound at residue Tyr-313. Lys-417 bears the N6-(pyridoxal phosphate)lysine mark.

Belongs to the trans-sulfuration enzymes family. It depends on pyridoxal 5'-phosphate as a cofactor.

It functions in the pathway secondary metabolite biosynthesis. In terms of biological role, cystathionine gamma-synthase-like enzyme; part of the gene cluster that mediates the biosynthesis of the psychoactive metabolites ibotenic acid and muscimol. The first committed step is glutamate hydroxylation by the 2-oxoglutarate-dependent dioxygenase iboH, and the last step is decarboxylation of ibotenic acid to muscimol by the decarboxylase iboD. The order of the intermediate reactions is somewhat ambiguous. IboA likely activates the carboxylic acid at position 5 to introduce an amide bond, and the flavin monooxygenase iboF generates the N-O bond. There are several options for the latter step. One option is that iboF directly hydroxylates the amide nitrogen formed by iboA to produce a hydroxamic acid species. Another option is that iboF hydroxylates an external N-containing compound, whose resulting N-O bond is subsequently introduced into the hydroxyglutamate scaffold. The paralogous PLP-dependent cystathionine gamma-synthase-like enzymes iboG1 and iboG2 are likely involved in substitution of the OH group at position 3 by the O-N moiety. The first cyclic intermediate is most probably tricholomic acid which is likely desaturated to ibotenic acid by the cytochrome P450 monooxygenase iboC. This Amanita muscaria (strain Koide BX008) protein is Cystathionine gamma-synthase-like enzyme iboG2.